We begin with the raw amino-acid sequence, 1085 residues long: RecBCD enzyme subunit RecC (1085 aa).

The protein belongs to the RecC family. As to quaternary structure, heterotrimer of RecB, RecC and RecD. All subunits contribute to DNA-binding.

Its function is as follows. A helicase/nuclease that prepares dsDNA breaks (DSB) for recombinational DNA repair. Binds to DSBs and unwinds DNA via a highly rapid and processive ATP-dependent bidirectional helicase activity. Holoenzyme degrades any linearized DNA that is unable to undergo homologous recombination. In the holoenzyme this subunit recognizes the wild-type Chi sequence, and when added to isolated RecB increases its ATP-dependent helicase processivity. Unlike the case in E.coli, suppresses RecA-dependent homologous recombination, is instead required for single-strand annealing pathway repair of DSB. The sequence is that of RecBCD enzyme subunit RecC from Mycolicibacterium smegmatis (strain ATCC 700084 / mc(2)155) (Mycobacterium smegmatis).